We begin with the raw amino-acid sequence, 541 residues long: Protein wntless homolog B (541 aa).

Over 1–15 the chain is Cytoplasmic; that stretch reads MAGAIIENMSTKKLC. The helical transmembrane segment at 16-36 threads the bilayer; it reads MVGVALLLLQVLAFLVGGLIA. The Lumenal segment spans residues 37–232; it reads PKPTTYVNPV…SIFQNGGFTM (196 aa). The chain crosses the membrane as a helical span at residues 233 to 253; the sequence is VWFAMKTFLTPCIIIIMIWYW. Residues 254–268 are Cytoplasmic-facing; that stretch reads RRITMMTRSPVLLEK. Residues 269–289 form a helical membrane-spanning segment; it reads VIFALGISMTFINIPVEWFSI. Over 290–303 the chain is Lumenal; it reads GYDWTWMLLFGDIR. Residues 304 to 324 form a helical membrane-spanning segment; the sequence is QGIFYAMLLSFWIIFCGEHMM. Residues 325–331 lie on the Cytoplasmic side of the membrane; sequence DQAERNR. Residues 332 to 352 form a helical membrane-spanning segment; the sequence is ISIYWKQVGPIAFGSCCLFIF. Residues 353 to 379 lie on the Lumenal side of the membrane; the sequence is DMCERGVQLKNPFYSIWTTDVGAEIAM. The helical transmembrane segment at 380–400 threads the bilayer; the sequence is AFIIVAGICACLYFLFLCFMV. Topologically, residues 401–431 are cytoplasmic; the sequence is YQVFRNISGKRSNLPAMSKARRLHYEGLIFR. A helical membrane pass occupies residues 432 to 452; it reads FKFLMIITLACAALTVVFFIT. Over 453-471 the chain is Lumenal; sequence TQITEGNWKLGDLSIELNS. A helical membrane pass occupies residues 472–492; it reads AFFTGIYGMWNLYVFALMFLY. The Cytoplasmic segment spans residues 493 to 541; sequence APSHKHYGDGQSNDGAGMSSGEELQLTTTITHIDGPTELYRLAGKEAQE.

This sequence belongs to the wntless family. Enriched in the animal hemisphere of the early cleavage embryo, where expression persists until the late gastrula stage. At the neurula stage, strongly expressed at the border of the neural plate and dorsal midline. After the neurula stage, expressed in various organs, including the eye, liver, heart, pronephros, otic vesicle, and dorsal neural tube. Expression in the developing eye is dynamic; expressed in the eye field from stages 23 to 27, and from stage 30 expression is confined to distinct regions including the central part and border of the eye.

The protein resides in the golgi apparatus membrane. It localises to the cytoplasmic vesicle membrane. Required for a subset of Wnt-dependent developmental processes, in particular, eye and pronephros development. Regulates the secretion of wnt4, which is required for eye development. This chain is Protein wntless homolog B (wls-b), found in Xenopus laevis (African clawed frog).